We begin with the raw amino-acid sequence, 88 residues long: Translation initiation factor IF-1 1 (88 aa).

Residues 1 to 72 form the S1-like domain; that stretch reads MSKEDMIELE…TKGRINFRHP (72 aa). Residues 66-88 are disordered; sequence RINFRHPTANPGAGPRPSHHHRR.

The protein belongs to the IF-1 family. In terms of assembly, component of the 30S ribosomal translation pre-initiation complex which assembles on the 30S ribosome in the order IF-2 and IF-3, IF-1 and N-formylmethionyl-tRNA(fMet); mRNA recruitment can occur at any time during PIC assembly.

It localises to the cytoplasm. Functionally, one of the essential components for the initiation of protein synthesis. Stabilizes the binding of IF-2 and IF-3 on the 30S subunit to which N-formylmethionyl-tRNA(fMet) subsequently binds. Helps modulate mRNA selection, yielding the 30S pre-initiation complex (PIC). Upon addition of the 50S ribosomal subunit IF-1, IF-2 and IF-3 are released leaving the mature 70S translation initiation complex. This chain is Translation initiation factor IF-1 1, found in Chromobacterium violaceum (strain ATCC 12472 / DSM 30191 / JCM 1249 / CCUG 213 / NBRC 12614 / NCIMB 9131 / NCTC 9757 / MK).